Reading from the N-terminus, the 115-residue chain is NADH-ubiquinone oxidoreductase chain 3 (115 aa).

A run of 3 helical transmembrane segments spans residues 4 to 24, 55 to 75, and 86 to 106; these read FIVM…AFWL, FFLV…LLPL, and ITML…AYEW.

The protein belongs to the complex I subunit 3 family. Core subunit of respiratory chain NADH dehydrogenase (Complex I) which is composed of 45 different subunits. Interacts with TMEM186. Interacts with TMEM242.

It is found in the mitochondrion inner membrane. It catalyses the reaction a ubiquinone + NADH + 5 H(+)(in) = a ubiquinol + NAD(+) + 4 H(+)(out). Functionally, core subunit of the mitochondrial membrane respiratory chain NADH dehydrogenase (Complex I) which catalyzes electron transfer from NADH through the respiratory chain, using ubiquinone as an electron acceptor. Essential for the catalytic activity of complex I. This chain is NADH-ubiquinone oxidoreductase chain 3, found in Reithrodontomys fulvescens (Fulvous harvest mouse).